The following is a 146-amino-acid chain: Transcriptional regulator AdcR (146 aa).

Positions 1-143 (MRQLAKDINA…IQRFLTALVG (143 aa)) constitute an HTH marR-type domain. Residues glutamate 24, cysteine 30, glutamate 41, and histidine 42 each contribute to the Zn(2+) site. The segment at residues 54 to 77 (NSELARRLNVSQAAVTKAIKSLVK) is a DNA-binding region (H-T-H motif). 3 residues coordinate Zn(2+): glutamate 107, histidine 108, and histidine 112.

Homodimer.

Its activity is regulated as follows. Zinc acts as a coregulator and is required for DNA-binding activity. Its function is as follows. Zinc-responsive regulator that acts both as a repressor and as an activator by regulating directly the promoters of its target genes. In the presence of zinc, directly represses the expression of the adcRCBA operon, of genes coding for a group of surface antigen zinc-binding pneumococcal histidine triad proteins (PhtA, PhtB, PhtD and PhtE), and of adcAII. Can also activate expression of adh. This Streptococcus pneumoniae serotype 2 (strain D39 / NCTC 7466) protein is Transcriptional regulator AdcR (adcR).